A 286-amino-acid polypeptide reads, in one-letter code: Phosphoribosylaminoimidazole-succinocarboxamide synthase (286 aa).

It belongs to the SAICAR synthetase family.

It carries out the reaction 5-amino-1-(5-phospho-D-ribosyl)imidazole-4-carboxylate + L-aspartate + ATP = (2S)-2-[5-amino-1-(5-phospho-beta-D-ribosyl)imidazole-4-carboxamido]succinate + ADP + phosphate + 2 H(+). The protein operates within purine metabolism; IMP biosynthesis via de novo pathway; 5-amino-1-(5-phospho-D-ribosyl)imidazole-4-carboxamide from 5-amino-1-(5-phospho-D-ribosyl)imidazole-4-carboxylate: step 1/2. This is Phosphoribosylaminoimidazole-succinocarboxamide synthase (purC) from Pasteurella multocida (strain Pm70).